A 128-amino-acid chain; its full sequence is MGLIWGLFSVIIASVAQLSLGFAASHLPPMTHLWDFIAALLAFGLDARILLLGLLGYLLSVFCWYKTLHKLALSKAYALLSMSYVLVWIASMVLPGREGTFSLKALLGVACIMSGLMLIFLPTTKQRY.

The Cytoplasmic segment spans residues 1-2; it reads MG. A helical membrane pass occupies residues 3–23; the sequence is LIWGLFSVIIASVAQLSLGFA. The Periplasmic segment spans residues 24–35; it reads ASHLPPMTHLWD. Residues 36-56 traverse the membrane as a helical segment; it reads FIAALLAFGLDARILLLGLLG. The Cytoplasmic portion of the chain corresponds to 57–75; that stretch reads YLLSVFCWYKTLHKLALSK. The chain crosses the membrane as a helical span at residues 76-96; sequence AYALLSMSYVLVWIASMVLPG. Over 97-100 the chain is Periplasmic; it reads REGT. A helical membrane pass occupies residues 101–121; the sequence is FSLKALLGVACIMSGLMLIFL. Topologically, residues 122–128 are cytoplasmic; that stretch reads PTTKQRY.

It belongs to the ArnF family. Heterodimer of ArnE and ArnF.

The protein localises to the cell inner membrane. It participates in bacterial outer membrane biogenesis; lipopolysaccharide biosynthesis. Functionally, translocates 4-amino-4-deoxy-L-arabinose-phosphoundecaprenol (alpha-L-Ara4N-phosphoundecaprenol) from the cytoplasmic to the periplasmic side of the inner membrane. The sequence is that of Probable 4-amino-4-deoxy-L-arabinose-phosphoundecaprenol flippase subunit ArnF from Shigella flexneri serotype 5b (strain 8401).